The sequence spans 544 residues: Protein angel homolog 2 (544 aa).

Belongs to the CCR4/nocturin family.

The sequence is that of Protein angel homolog 2 (ANGEL2) from Homo sapiens (Human).